The sequence spans 263 residues: MFLVNSFLKGGGGGGGGGGLGGGLGNVLGGLISGAGGGGGGGGGGGGGGGGTAMRILGGVISAISEAAAQYNPEPVPPRTHYSNIEANESEEVRQFRRLFAQLAGDDMEVSATELMNILNKVVTRHPDLKTDGFGIDTCRSMVAVMDSDTTGKLGFEEFKYLWNNIKKWQAVYKQFDVDRSGTIGSSELPGAFEAAGFRLNEHLYNMIIRRYSDEGGNMDFDNFISCLVRLDAMFRAFKSLDKDGTGQIQVNIQEWLQLTMYS.

The residue at position 1 (M1) is an N-acetylmethionine. Phosphoserine is present on S6. Positions 91-125 (EEVRQFRRLFAQLAGDDMEVSATELMNILNKVVTR) constitute an EF-hand 1; atypical domain. Ca(2+) contacts are provided by A104, D107, E109, E114, D132, D147, D149, T151, K153, and E158. 4 consecutive EF-hand domains span residues 134-167 (FGIDTCRSMVAVMDSDTTGKLGFEEFKYLWNNIK), 164-199 (NNIKKWQAVYKQFDVDRSGTIGSSELPGAFEAAGFR), 200-228 (LNEHLYNMIIRRYSDEGGNMDFDNFISCL), and 229-263 (VRLDAMFRAFKSLDKDGTGQIQVNIQEWLQLTMYS). K174 carries the post-translational modification N6-acetyllysine. Ca(2+) contacts are provided by D177, D179, S181, T183, E188, and D220.

Homodimer or heterodimer of a large (catalytic) and a small (regulatory) subunit. In presence of calcium, the heterodimer dissociates.

The protein resides in the cytoplasm. The protein localises to the cell membrane. Its function is as follows. Regulatory subunit of the calcium-regulated non-lysosomal thiol-protease which catalyzes limited proteolysis of substrates involved in cytoskeletal remodeling and signal transduction. Essential for embryonic development. The protein is Calpain small subunit 1 (CAPNS1) of Bos taurus (Bovine).